Consider the following 60-residue polypeptide: Homeobox protein CHOX-CAD2 (60 aa).

A DNA-binding region (homeobox) is located at residues 1–60 (KEKYRVVYTDHQRLELEKEFHCNRYITIRRKSELAVNLGLSERQVKSWFQNRRAKERKII).

The protein belongs to the Caudal homeobox family.

The protein localises to the nucleus. The polypeptide is Homeobox protein CHOX-CAD2 (CHOX-CAD2) (Gallus gallus (Chicken)).